We begin with the raw amino-acid sequence, 141 residues long: Large ribosomal subunit protein uL16 (141 aa).

This sequence belongs to the universal ribosomal protein uL16 family. In terms of assembly, part of the 50S ribosomal subunit.

Functionally, binds 23S rRNA and is also seen to make contacts with the A and possibly P site tRNAs. This chain is Large ribosomal subunit protein uL16, found in Aliarcobacter butzleri (strain RM4018) (Arcobacter butzleri).